The sequence spans 706 residues: Polyribonucleotide nucleotidyltransferase (706 aa).

Residues Asp-485 and Asp-491 each coordinate Mg(2+). The KH domain occupies 552 to 611 (PRMLKMKIHPDKIREVIGSGGKTINKIIEDTGVKIDIENDGTIFIAAQTQEAGELALSII). Positions 621–689 (GDIFKGKVIK…QQGKVSLSRK (69 aa)) constitute an S1 motif domain.

Belongs to the polyribonucleotide nucleotidyltransferase family. Requires Mg(2+) as cofactor.

Its subcellular location is the cytoplasm. It catalyses the reaction RNA(n+1) + phosphate = RNA(n) + a ribonucleoside 5'-diphosphate. Involved in mRNA degradation. Catalyzes the phosphorolysis of single-stranded polyribonucleotides processively in the 3'- to 5'-direction. The sequence is that of Polyribonucleotide nucleotidyltransferase from Alkaliphilus oremlandii (strain OhILAs) (Clostridium oremlandii (strain OhILAs)).